A 171-amino-acid polypeptide reads, in one-letter code: S-ribosylhomocysteine lyase (171 aa).

Fe cation contacts are provided by H54, H58, and C128.

The protein belongs to the LuxS family. In terms of assembly, homodimer. It depends on Fe cation as a cofactor.

The catalysed reaction is S-(5-deoxy-D-ribos-5-yl)-L-homocysteine = (S)-4,5-dihydroxypentane-2,3-dione + L-homocysteine. Functionally, involved in the synthesis of autoinducer 2 (AI-2) which is secreted by bacteria and is used to communicate both the cell density and the metabolic potential of the environment. The regulation of gene expression in response to changes in cell density is called quorum sensing. Catalyzes the transformation of S-ribosylhomocysteine (RHC) to homocysteine (HC) and 4,5-dihydroxy-2,3-pentadione (DPD). The protein is S-ribosylhomocysteine lyase of Escherichia coli O157:H7.